The sequence spans 184 residues: ATP-dependent protease subunit HslV (184 aa).

Residue T12 is part of the active site. The Na(+) site is built by A166, C169, and T172.

This sequence belongs to the peptidase T1B family. HslV subfamily. As to quaternary structure, a double ring-shaped homohexamer of HslV is capped on each side by a ring-shaped HslU homohexamer. The assembly of the HslU/HslV complex is dependent on binding of ATP.

The protein localises to the cytoplasm. It carries out the reaction ATP-dependent cleavage of peptide bonds with broad specificity.. Allosterically activated by HslU binding. Its function is as follows. Protease subunit of a proteasome-like degradation complex believed to be a general protein degrading machinery. The protein is ATP-dependent protease subunit HslV of Brucella anthropi (strain ATCC 49188 / DSM 6882 / CCUG 24695 / JCM 21032 / LMG 3331 / NBRC 15819 / NCTC 12168 / Alc 37) (Ochrobactrum anthropi).